The following is a 196-amino-acid chain: Putative NADH dehydrogenase/NAD(P)H nitroreductase XCV0587 (196 aa).

The protein belongs to the nitroreductase family. HadB/RutE subfamily. FMN is required as a cofactor.

This is Putative NADH dehydrogenase/NAD(P)H nitroreductase XCV0587 from Xanthomonas euvesicatoria pv. vesicatoria (strain 85-10) (Xanthomonas campestris pv. vesicatoria).